A 217-amino-acid chain; its full sequence is Very-long-chain (3R)-3-hydroxyacyl-CoA dehydratase PHS1 (217 aa).

Residues 1-11 (MSKKLASPLSF) lie on the Cytoplasmic side of the membrane. Residues 12-29 (LPLYNLLSAVGWSYLLYL) traverse the membrane as a helical segment. Residues 30–47 (VISLYPKVGQPAFFYQTK) are Lumenal-facing. A helical membrane pass occupies residues 48 to 66 (NVATLVQCGAIIEIINSFL). Residues 67-76 (GVVRSPLLTT) are Cytoplasmic-facing. The chain crosses the membrane as a helical span at residues 77-94 (VAQVSSRLLVVLGIFQLL). Over 95-99 (PNTSG) the chain is Lumenal. Residues 100 to 117 (VQSVVYISLLLAWSITEI) traverse the membrane as a helical segment. The Cytoplasmic portion of the chain corresponds to 118–142 (VRYLYYFFMLVFKNGAPKILILLRY). The helical transmembrane segment at 143–160 (NLFWILYPTGVASELRII) threads the bilayer. Active-site residues include Y149 and E156. Residues 161 to 178 (YCALNAAESQYSLLYKRI) are Lumenal-facing. A helical membrane pass occupies residues 179 to 196 (LIAAMLAYIPGFPMLFLH). The Cytoplasmic segment spans residues 197–217 (MVAQRKKVMKSLRSSFGKKLI). The short motif at 214-217 (KKLI) is the Endoplasmic reticulum retention signal element.

The protein belongs to the very long-chain fatty acids dehydratase HACD family.

It localises to the endoplasmic reticulum membrane. The protein resides in the vacuole membrane. The enzyme catalyses a very-long-chain (3R)-3-hydroxyacyl-CoA = a very-long-chain (2E)-enoyl-CoA + H2O. It carries out the reaction (3R)-hydroxyeicosanoyl-CoA = (2E)-eicosenoyl-CoA + H2O. The catalysed reaction is (3R)-hydroxydocosanoyl-CoA = (2E)-docosenoyl-CoA + H2O. It catalyses the reaction (3R)-hydroxyoctadecanoyl-CoA = (2E)-octadecenoyl-CoA + H2O. The enzyme catalyses (3R)-hydroxytetracosanoyl-CoA = (2E)-tetracosenoyl-CoA + H2O. It carries out the reaction (3R)-hydroxyhexacosanoyl-CoA = (2E)-hexacosenoyl-CoA + H2O. The catalysed reaction is (3R)-hydroxyhexadecanoyl-CoA = (2E)-hexadecenoyl-CoA + H2O. It participates in lipid metabolism; fatty acid biosynthesis. Its function is as follows. Catalyzes the third of the four reactions of the long-chain fatty acids elongation cycle. This endoplasmic reticulum-bound enzymatic process, allows the addition of two carbons to the chain of long- and very long-chain fatty acids/VLCFAs per cycle. This enzyme catalyzes the dehydration of the 3-hydroxyacyl-CoA intermediate into trans-2,3-enoyl-CoA, within each cycle of fatty acid elongation. Thereby, it participates in the production of VLCFAs of different chain lengths that are involved in multiple biological processes as precursors of membrane lipids and lipid mediators. The sequence is that of Very-long-chain (3R)-3-hydroxyacyl-CoA dehydratase PHS1 (PHS1) from Saccharomyces cerevisiae (strain ATCC 204508 / S288c) (Baker's yeast).